The primary structure comprises 192 residues: UPF0312 protein PputGB1_5030 (192 aa).

A signal peptide spans 1–23; it reads MLKKTFAALALGTALLSAGQAMA.

This sequence belongs to the UPF0312 family. Type 1 subfamily.

It is found in the periplasm. This Pseudomonas putida (strain GB-1) protein is UPF0312 protein PputGB1_5030.